The following is a 666-amino-acid chain: Long chain acyl-CoA synthetase 5 (666 aa).

228-239 serves as a coordination point for ATP; that stretch reads IMYTSGTTGDPK. The segment at 495–519 is fatty acid-binding; sequence DGWLHTGDVGEWQPNGSMKIIDRKK.

The protein belongs to the ATP-dependent AMP-binding enzyme family. Requires Mg(2+) as cofactor.

The enzyme catalyses a long-chain fatty acid + ATP + CoA = a long-chain fatty acyl-CoA + AMP + diphosphate. The protein operates within lipid metabolism; fatty acid metabolism. Functionally, activation of long-chain fatty acids for both synthesis of cellular lipids, and degradation via beta-oxidation. Preferentially uses palmitate, palmitoleate, oleate and linoleate. The sequence is that of Long chain acyl-CoA synthetase 5 (LACS5) from Arabidopsis thaliana (Mouse-ear cress).